The following is a 406-amino-acid chain: Phosphatidylserine decarboxylase proenzyme, mitochondrial (406 aa).

A mitochondrion-targeting transit peptide spans Met-1 to Lys-49. At Val-50–Leu-60 the chain is on the mitochondrial matrix side. A helical transmembrane segment spans residues Leu-61–Gln-79. The Mitochondrial intermembrane portion of the chain corresponds to Tyr-80–Leu-406. Catalysis depends on charge relay system; for autoendoproteolytic cleavage activity residues Asp-188, His-264, and Ser-375. Ser-375 (schiff-base intermediate with substrate; via pyruvic acid; for decarboxylase activity) is an active-site residue. The residue at position 375 (Ser-375) is a Pyruvic acid (Ser); by autocatalysis.

Belongs to the phosphatidylserine decarboxylase family. PSD-B subfamily. Eukaryotic type I sub-subfamily. In terms of assembly, heterodimer of a large membrane-associated beta subunit and a small pyruvoyl-containing alpha subunit. Pyruvate is required as a cofactor. In terms of processing, is synthesized initially as an inactive proenzyme. Formation of the active enzyme involves a self-maturation process in which the active site pyruvoyl group is generated from an internal serine residue via an autocatalytic post-translational modification. Two non-identical subunits are generated from the proenzyme in this reaction, and the pyruvate is formed at the N-terminus of the alpha chain, which is derived from the carboxyl end of the proenzyme. The autoendoproteolytic cleavage occurs by a canonical serine protease mechanism, in which the side chain hydroxyl group of the serine supplies its oxygen atom to form the C-terminus of the beta chain, while the remainder of the serine residue undergoes an oxidative deamination to produce ammonia and the pyruvoyl prosthetic group on the alpha chain. During this reaction, the Ser that is part of the protease active site of the proenzyme becomes the pyruvoyl prosthetic group, which constitutes an essential element of the active site of the mature decarboxylase.

The protein resides in the mitochondrion inner membrane. It localises to the cytoplasm. Its subcellular location is the lipid droplet. It carries out the reaction a 1,2-diacyl-sn-glycero-3-phospho-L-serine + H(+) = a 1,2-diacyl-sn-glycero-3-phosphoethanolamine + CO2. Its pathway is phospholipid metabolism; phosphatidylethanolamine biosynthesis. Its activity is regulated as follows. Inhibited by hydroxylamine. Its function is as follows. Catalyzes the formation of phosphatidylethanolamine (PtdEtn) from phosphatidylserine (PtdSer). Plays a central role in phospholipid metabolism and in the interorganelle trafficking of phosphatidylserine. May be involved in lipid droplet biogenesis at the endoplasmic reticulum membrane. The polypeptide is Phosphatidylserine decarboxylase proenzyme, mitochondrial (Rattus norvegicus (Rat)).